The primary structure comprises 174 residues: MTLILGIDPGSRITGYGVVRQTARGCEYVASGCIRTGSGELHERLQIVFRGVSEIIAQHGPVTMGIERVFMARNADSALKLGQARGAAIVAAAEAGLEIAEYSATQVKQAVAGTGGANKEQVMMMVMHLLKLTQKPQIDASDALAIALCHAHTRSSLVPHGLATARRRGGRLRL.

Residues Asp8, Glu67, and Asp139 contribute to the active site. The Mg(2+) site is built by Asp8, Glu67, and Asp139.

It belongs to the RuvC family. Homodimer which binds Holliday junction (HJ) DNA. The HJ becomes 2-fold symmetrical on binding to RuvC with unstacked arms; it has a different conformation from HJ DNA in complex with RuvA. In the full resolvosome a probable DNA-RuvA(4)-RuvB(12)-RuvC(2) complex forms which resolves the HJ. Requires Mg(2+) as cofactor.

It is found in the cytoplasm. The enzyme catalyses Endonucleolytic cleavage at a junction such as a reciprocal single-stranded crossover between two homologous DNA duplexes (Holliday junction).. Its function is as follows. The RuvA-RuvB-RuvC complex processes Holliday junction (HJ) DNA during genetic recombination and DNA repair. Endonuclease that resolves HJ intermediates. Cleaves cruciform DNA by making single-stranded nicks across the HJ at symmetrical positions within the homologous arms, yielding a 5'-phosphate and a 3'-hydroxyl group; requires a central core of homology in the junction. The consensus cleavage sequence is 5'-(A/T)TT(C/G)-3'. Cleavage occurs on the 3'-side of the TT dinucleotide at the point of strand exchange. HJ branch migration catalyzed by RuvA-RuvB allows RuvC to scan DNA until it finds its consensus sequence, where it cleaves and resolves the cruciform DNA. The protein is Crossover junction endodeoxyribonuclease RuvC of Pseudomonas putida (strain GB-1).